The chain runs to 212 residues: ATP-dependent Clp protease proteolytic subunit (212 aa).

The active-site Nucleophile is Ser114. His139 is an active-site residue.

This sequence belongs to the peptidase S14 family. In terms of assembly, fourteen ClpP subunits assemble into 2 heptameric rings which stack back to back to give a disk-like structure with a central cavity, resembling the structure of eukaryotic proteasomes.

It localises to the cytoplasm. The catalysed reaction is Hydrolysis of proteins to small peptides in the presence of ATP and magnesium. alpha-casein is the usual test substrate. In the absence of ATP, only oligopeptides shorter than five residues are hydrolyzed (such as succinyl-Leu-Tyr-|-NHMec, and Leu-Tyr-Leu-|-Tyr-Trp, in which cleavage of the -Tyr-|-Leu- and -Tyr-|-Trp bonds also occurs).. In terms of biological role, cleaves peptides in various proteins in a process that requires ATP hydrolysis. Has a chymotrypsin-like activity. Plays a major role in the degradation of misfolded proteins. The chain is ATP-dependent Clp protease proteolytic subunit from Aromatoleum aromaticum (strain DSM 19018 / LMG 30748 / EbN1) (Azoarcus sp. (strain EbN1)).